Reading from the N-terminus, the 103-residue chain is Eukaryotic translation initiation factor 4E-1A-binding protein homolog (103 aa).

Residues 49 to 103 (NSPLSKTPPPQLAHITNTELNKKVEKSTTTPTTTTPPTTTAKPKPTNDDDIFPME) form a disordered region. Residues 76–92 (TTTPTTTTPPTTTAKPK) are compositionally biased toward low complexity.

It belongs to the eIF4E-binding protein family.

Functionally, regulates assembly of the eIF4F complex. The chain is Eukaryotic translation initiation factor 4E-1A-binding protein homolog (febA) from Dictyostelium discoideum (Social amoeba).